A 508-amino-acid polypeptide reads, in one-letter code: Photosystem II CP47 reaction center protein (508 aa).

6 helical membrane-spanning segments follow: residues 21-36 (AVHL…WAGS), 101-115 (IILS…IWHW), 140-156 (GIHL…FGAF), 203-218 (IAAG…FHLS), 237-252 (VLSS…AFVV), and 457-472 (IFAL…HGAR).

This sequence belongs to the PsbB/PsbC family. PsbB subfamily. In terms of assembly, PSII is composed of 1 copy each of membrane proteins PsbA, PsbB, PsbC, PsbD, PsbE, PsbF, PsbH, PsbI, PsbJ, PsbK, PsbL, PsbM, PsbT, PsbY, PsbZ, Psb30/Ycf12, at least 3 peripheral proteins of the oxygen-evolving complex and a large number of cofactors. It forms dimeric complexes. Binds multiple chlorophylls. PSII binds additional chlorophylls, carotenoids and specific lipids. serves as cofactor.

It is found in the plastid. The protein localises to the chloroplast thylakoid membrane. Functionally, one of the components of the core complex of photosystem II (PSII). It binds chlorophyll and helps catalyze the primary light-induced photochemical processes of PSII. PSII is a light-driven water:plastoquinone oxidoreductase, using light energy to abstract electrons from H(2)O, generating O(2) and a proton gradient subsequently used for ATP formation. The polypeptide is Photosystem II CP47 reaction center protein (Bigelowiella natans (Pedinomonas minutissima)).